A 124-amino-acid chain; its full sequence is Large ribosomal subunit protein bL21 (124 aa).

This sequence belongs to the bacterial ribosomal protein bL21 family. Part of the 50S ribosomal subunit. Contacts protein L20.

Functionally, this protein binds to 23S rRNA in the presence of protein L20. The protein is Large ribosomal subunit protein bL21 of Synechocystis sp. (strain ATCC 27184 / PCC 6803 / Kazusa).